The sequence spans 299 residues: Phosphoribosylaminoimidazole-succinocarboxamide synthase (299 aa).

The protein belongs to the SAICAR synthetase family.

The catalysed reaction is 5-amino-1-(5-phospho-D-ribosyl)imidazole-4-carboxylate + L-aspartate + ATP = (2S)-2-[5-amino-1-(5-phospho-beta-D-ribosyl)imidazole-4-carboxamido]succinate + ADP + phosphate + 2 H(+). Its pathway is purine metabolism; IMP biosynthesis via de novo pathway; 5-amino-1-(5-phospho-D-ribosyl)imidazole-4-carboxamide from 5-amino-1-(5-phospho-D-ribosyl)imidazole-4-carboxylate: step 1/2. In Desulfatibacillum aliphaticivorans, this protein is Phosphoribosylaminoimidazole-succinocarboxamide synthase.